The chain runs to 129 residues: Fluoride-specific ion channel FluC (129 aa).

4 consecutive transmembrane segments (helical) span residues 5 to 25 (LTIA…SGWV), 32 to 52 (AFPF…GLIM), 60 to 80 (LIPA…LTTF), and 99 to 119 (AMVN…LGVI). 2 residues coordinate Na(+): glycine 75 and threonine 78.

Belongs to the fluoride channel Fluc/FEX (TC 1.A.43) family.

The protein localises to the cell inner membrane. The enzyme catalyses fluoride(in) = fluoride(out). With respect to regulation, na(+) is not transported, but it plays an essential structural role and its presence is essential for fluoride channel function. In terms of biological role, fluoride-specific ion channel. Important for reducing fluoride concentration in the cell, thus reducing its toxicity. The chain is Fluoride-specific ion channel FluC from Pelobacter propionicus (strain DSM 2379 / NBRC 103807 / OttBd1).